The following is a 249-amino-acid chain: 2,3-bisphosphoglycerate-dependent phosphoglycerate mutase (249 aa).

Substrate-binding positions include 8–15, 21–22, R60, 87–90, K98, 114–115, and 183–184; these read RHGESTWN, TG, ERHY, RR, and GN. Catalysis depends on H9, which acts as the Tele-phosphohistidine intermediate. E87 serves as the catalytic Proton donor/acceptor.

Belongs to the phosphoglycerate mutase family. BPG-dependent PGAM subfamily.

It catalyses the reaction (2R)-2-phosphoglycerate = (2R)-3-phosphoglycerate. The protein operates within carbohydrate degradation; glycolysis; pyruvate from D-glyceraldehyde 3-phosphate: step 3/5. Functionally, catalyzes the interconversion of 2-phosphoglycerate and 3-phosphoglycerate. In Methanoregula boonei (strain DSM 21154 / JCM 14090 / 6A8), this protein is 2,3-bisphosphoglycerate-dependent phosphoglycerate mutase.